A 276-amino-acid chain; its full sequence is Lyso-ornithine lipid O-acyltransferase (276 aa).

A helical membrane pass occupies residues 25–47 (LALRGGAMALVLMAGLTLHLAVR).

Belongs to the 1-acyl-sn-glycerol-3-phosphate acyltransferase family. OlsA subfamily.

The protein localises to the membrane. It catalyses the reaction a lyso-ornithine lipid + a fatty acyl-[ACP] = an N(2)-[(3R)-3-(acyloxy)acyl]-L-ornithine lipid + holo-[ACP]. It carries out the reaction a fatty acyl-[ACP] + a 1-acyl-sn-glycero-3-phosphate = a 1,2-diacyl-sn-glycero-3-phosphate + holo-[ACP]. Its pathway is lipid metabolism. It participates in phospholipid metabolism. Its function is as follows. Catalyzes the second step in the formation of ornithine lipids, which are phosphorus-free membrane lipids. Uses acyl-acyl carrier protein (acyl-AcpP) as an acyl donor and converts lyso-ornithine lipid (LOL) into ornithine lipid (OL). It can also act as an alternate acyl-sn-glycerol-3-phosphate acyltransferase (AGPAT) to ensure glycerophospholipid production. The polypeptide is Lyso-ornithine lipid O-acyltransferase (Rhodobacter capsulatus (strain ATCC BAA-309 / NBRC 16581 / SB1003)).